The sequence spans 303 residues: Sulfate adenylyltransferase subunit 2 (303 aa).

It belongs to the PAPS reductase family. CysD subfamily. In terms of assembly, heterodimer composed of CysD, the smaller subunit, and CysN.

It carries out the reaction sulfate + ATP + H(+) = adenosine 5'-phosphosulfate + diphosphate. The protein operates within sulfur metabolism; hydrogen sulfide biosynthesis; sulfite from sulfate: step 1/3. Functionally, with CysN forms the ATP sulfurylase (ATPS) that catalyzes the adenylation of sulfate producing adenosine 5'-phosphosulfate (APS) and diphosphate, the first enzymatic step in sulfur assimilation pathway. APS synthesis involves the formation of a high-energy phosphoric-sulfuric acid anhydride bond driven by GTP hydrolysis by CysN coupled to ATP hydrolysis by CysD. The polypeptide is Sulfate adenylyltransferase subunit 2 (Akkermansia muciniphila (strain ATCC BAA-835 / DSM 22959 / JCM 33894 / BCRC 81048 / CCUG 64013 / CIP 107961 / Muc)).